Reading from the N-terminus, the 198-residue chain is Large ribosomal subunit protein bL25 (198 aa).

The protein belongs to the bacterial ribosomal protein bL25 family. CTC subfamily. In terms of assembly, part of the 50S ribosomal subunit; part of the 5S rRNA/L5/L18/L25 subcomplex. Contacts the 5S rRNA. Binds to the 5S rRNA independently of L5 and L18.

Its function is as follows. This is one of the proteins that binds to the 5S RNA in the ribosome where it forms part of the central protuberance. This is Large ribosomal subunit protein bL25 from Phocaeicola vulgatus (strain ATCC 8482 / DSM 1447 / JCM 5826 / CCUG 4940 / NBRC 14291 / NCTC 11154) (Bacteroides vulgatus).